The sequence spans 549 residues: Fumarate hydratase 1, mitochondrial (549 aa).

Cysteine 114 is a binding site for [4Fe-4S] cluster. (S)-malate-binding positions include 115 to 116 (QD), arginine 154, glycine 197, and 200 to 206 (NKSFLLQ). Residues cysteine 233 and cysteine 328 each contribute to the [4Fe-4S] cluster site. (S)-malate-binding positions include arginine 404, 450 to 454 (TTAGR), and lysine 474.

Belongs to the class-I fumarase family. In terms of assembly, homodimer. [4Fe-4S] cluster serves as cofactor.

It is found in the mitochondrion. The catalysed reaction is (S)-malate = fumarate + H2O. It participates in carbohydrate metabolism; tricarboxylic acid cycle; (S)-malate from fumarate: step 1/1. Its activity is regulated as follows. Specifically and competitively inhibited by 2-thiomalate, which coordinates with the catalytic [4Fe-4S] cluster. Its function is as follows. Catalyzes the reversible hydration of fumarate to (S)-malate. Catalyzes the hydration of fumarate to L-malate in the tricarboxylic acid (TCA) cycle to facilitate a transition step in the production of energy in the form of NADH. This Leishmania major protein is Fumarate hydratase 1, mitochondrial.